The following is a 105-amino-acid chain: Pyrimidine/purine nucleoside phosphorylase (105 aa).

This sequence belongs to the nucleoside phosphorylase PpnP family.

The enzyme catalyses a purine D-ribonucleoside + phosphate = a purine nucleobase + alpha-D-ribose 1-phosphate. It catalyses the reaction adenosine + phosphate = alpha-D-ribose 1-phosphate + adenine. The catalysed reaction is cytidine + phosphate = cytosine + alpha-D-ribose 1-phosphate. It carries out the reaction guanosine + phosphate = alpha-D-ribose 1-phosphate + guanine. The enzyme catalyses inosine + phosphate = alpha-D-ribose 1-phosphate + hypoxanthine. It catalyses the reaction thymidine + phosphate = 2-deoxy-alpha-D-ribose 1-phosphate + thymine. The catalysed reaction is uridine + phosphate = alpha-D-ribose 1-phosphate + uracil. It carries out the reaction xanthosine + phosphate = alpha-D-ribose 1-phosphate + xanthine. Functionally, catalyzes the phosphorolysis of diverse nucleosides, yielding D-ribose 1-phosphate and the respective free bases. Can use uridine, adenosine, guanosine, cytidine, thymidine, inosine and xanthosine as substrates. Also catalyzes the reverse reactions. The protein is Pyrimidine/purine nucleoside phosphorylase of Cupriavidus taiwanensis (strain DSM 17343 / BCRC 17206 / CCUG 44338 / CIP 107171 / LMG 19424 / R1) (Ralstonia taiwanensis (strain LMG 19424)).